The following is a 1357-amino-acid chain: Ubiquitin carboxyl-terminal hydrolase 19 (1357 aa).

Disordered stretches follow at residues 1–52 (MSAG…PTKD), 162–239 (LSPI…SDSA), and 275–296 (VSPR…EKDD). Topologically, residues 1–1330 (MSAGTSATGP…TTSDEGCLRY (1330 aa)) are cytoplasmic. Basic and acidic residues-rich tracts occupy residues 28-52 (DRAN…PTKD) and 171-182 (SEPRRAKQEARN). Positions 51–140 (KDELLLDWRQ…VPLLTWPSLL (90 aa)) constitute a CS 1 domain. The span at 194 to 206 (SGASPGAQAGPSA) shows a compositional bias: low complexity. A phosphoserine mark is found at Ser-221 and Ser-283. A CS 2 domain is found at 321-423 (LAFVKNDSYE…RQSQRWGGLE (103 aa)). The segment at 432-479 (AKVAVPTGPTPLDSTPPGGGPLPLTGQEEARAVEKEKPKARSEDSGLD) is disordered. Over residues 437–457 (PTGPTPLDSTPPGGGPLPLTG) the composition is skewed to low complexity. Residues 459–475 (EEARAVEKEKPKARSED) are compositionally biased toward basic and acidic residues. The USP domain maps to 536-1253 (TGLVNLGNTC…YAYVLFYRRR (718 aa)). The active-site Nucleophile is the Cys-545. Cys-830, Cys-833, Cys-847, Cys-850, Cys-856, Cys-860, His-868, and Cys-872 together coordinate Zn(2+). The MYND-type zinc finger occupies 830-872 (CAACQRKQQSEDEKLKRCTRCYRVGYCNQFCQKTHWPDHKGLC). The interval 962–981 (DTGAHRMWPPADRGPVPSTS) is disordered. His-1204 functions as the Proton acceptor in the catalytic mechanism. Positions 1259-1271 (RPPRAAHAEHHPD) are enriched in basic and acidic residues. Disordered regions lie at residues 1259–1278 (RPPR…AAEA) and 1292–1320 (AEEE…PRGP). A helical membrane pass occupies residues 1331 to 1351 (FVLGTVAALVALVLNVFYPLV). Topologically, residues 1352–1357 (SQSRWR) are lumenal.

Interacts with RNF123. Interacts with BIRC2/c-IAP1, BIRC3/c-IAP2 and XIAP/BIRC4. Interacts with HIF1A (via N-terminus). In terms of tissue distribution, expressed in testis, heart, kidney and skeletal muscle. Low levels of expression are detectable in all other tissues screened.

It localises to the endoplasmic reticulum membrane. It catalyses the reaction Thiol-dependent hydrolysis of ester, thioester, amide, peptide and isopeptide bonds formed by the C-terminal Gly of ubiquitin (a 76-residue protein attached to proteins as an intracellular targeting signal).. Functionally, deubiquitinating enzyme that regulates the degradation of various proteins by removing ubiquitin moieties, thereby preventing their proteasomal degradation. Stabilizes RNF123, which promotes CDKN1B degradation and contributes to cell proliferation. Decreases the levels of ubiquitinated proteins during skeletal muscle formation and acts to repress myogenesis. Modulates transcription of major myofibrillar proteins. Also involved in turnover of endoplasmic-reticulum-associated degradation (ERAD) substrates. Mechanistically, deubiquitinates and thereby stabilizes several E3 ligases involved in the ERAD pathway including SYVN1 or MARCHF6. Regulates the stability of other E3 ligases including BIRC2/c-IAP1 and BIRC3/c-IAP2 by preventing their ubiquitination. Required for cells to mount an appropriate response to hypoxia by rescuing HIF1A from degradation in a non-catalytic manner and by mediating the deubiquitination of FUNDC1. Attenuates mitochondrial damage and ferroptosis by targeting and stabilizing NADPH oxidase 4/NOX4. Negatively regulates TNF-alpha- and IL-1beta-triggered NF-kappa-B activation by hydrolyzing 'Lys-27'- and 'Lys-63'-linked polyubiquitin chains from MAP3K7. Modulates also the protein level and aggregation of polyQ-expanded huntingtin/HTT through HSP90AA1. This is Ubiquitin carboxyl-terminal hydrolase 19 (Usp19) from Rattus norvegicus (Rat).